The primary structure comprises 238 residues: Leucyl/phenylalanyl-tRNA--protein transferase (238 aa).

This sequence belongs to the L/F-transferase family.

The protein resides in the cytoplasm. It catalyses the reaction N-terminal L-lysyl-[protein] + L-leucyl-tRNA(Leu) = N-terminal L-leucyl-L-lysyl-[protein] + tRNA(Leu) + H(+). It carries out the reaction N-terminal L-arginyl-[protein] + L-leucyl-tRNA(Leu) = N-terminal L-leucyl-L-arginyl-[protein] + tRNA(Leu) + H(+). The enzyme catalyses L-phenylalanyl-tRNA(Phe) + an N-terminal L-alpha-aminoacyl-[protein] = an N-terminal L-phenylalanyl-L-alpha-aminoacyl-[protein] + tRNA(Phe). In terms of biological role, functions in the N-end rule pathway of protein degradation where it conjugates Leu, Phe and, less efficiently, Met from aminoacyl-tRNAs to the N-termini of proteins containing an N-terminal arginine or lysine. The chain is Leucyl/phenylalanyl-tRNA--protein transferase from Pseudoalteromonas translucida (strain TAC 125).